The primary structure comprises 168 residues: Peptide deformylase 1 (168 aa).

Fe cation-binding residues include C92 and H134. E135 is an active-site residue. A Fe cation-binding site is contributed by H138.

It belongs to the polypeptide deformylase family. Requires Fe(2+) as cofactor.

The enzyme catalyses N-terminal N-formyl-L-methionyl-[peptide] + H2O = N-terminal L-methionyl-[peptide] + formate. Its function is as follows. Removes the formyl group from the N-terminal Met of newly synthesized proteins. Requires at least a dipeptide for an efficient rate of reaction. N-terminal L-methionine is a prerequisite for activity but the enzyme has broad specificity at other positions. The sequence is that of Peptide deformylase 1 from Pseudomonas syringae pv. tomato (strain ATCC BAA-871 / DC3000).